Consider the following 336-residue polypeptide: HTH-type transcriptional repressor PurR (336 aa).

Residues 2–56 (ATIKDVARLAGVSTTTVSHVINKTRFVAETTQEKVMEAVKQLNYAPSAVARSLKC) enclose the HTH lacI-type domain. The H-T-H motif DNA-binding region spans 4 to 23 (IKDVARLAGVSTTTVSHVIN). Residues 48-56 (SAVARSLKC) mediate DNA binding. The hypoxanthine site is built by phenylalanine 73, lysine 189, phenylalanine 220, and aspartate 274.

Homodimer.

It participates in purine metabolism; purine nucleotide biosynthesis [regulation]. Is the main repressor of the genes involved in the de novo synthesis of purine nucleotides, regulating purB, purC, purEK, purF, purHD, purL, purMN and guaBA expression. PurR is allosterically activated to bind its cognate DNA by binding the purine corepressors, hypoxanthine or guanine, thereby effecting transcription repression. The chain is HTH-type transcriptional repressor PurR from Vibrio cholerae serotype O1 (strain ATCC 39315 / El Tor Inaba N16961).